Consider the following 749-residue polypeptide: MDEATQRQDPIEETDAEKKVQVVPSLWGRLVSNHPESRHIDLIEHSIFFGRNPKRCQVVLHDPTVSGIHCRIFREEIPCQKYNNNNNNDGDNNNNNNNNNNNNNNNNNNNNNNNNNNNNNNNNNNNTTKNYITKITDTSSNGTFVKGCILGKDKTTIIQNGDMVSFTSAKLISSLSFTFLDLTNPYIDEPFEEEMNKKYSIQGILGTGNFSVVKRCIRRDTGEVFAVKIIDKKKFWSQTKTRRQMESEVEILQKIKHPNIISIIDIVQSDRYFYIVLELATGGELFEKIKQKGRFSEPEAKDTFKQILEAVSYLHDLNISHRDLKPENILISAVSHGKSSVIKVTDFGLAKIIGEKEMATTLCGTPLYVAPEIIRNCLHGDGGAQVNTGYGKEVDVWSLGCILYILLSGRPPFDFDHTNNFNLKLINQGLYNFSLPVWDVVTENAKDLIKKLLNVDPTKRISTKGALSHDWFNDDDLLRCSTVIANQSPISKSPQRSHGVVQLPVVDVKSKNIPMTLNSTTTNTTSPNNNNNNNNNNNNKNNNKNIIKSLNSNSNNYNNNSVLKKTSQSPKTKSNRPKLQFEQPSPNQHNNNNNNNNNNNNNNNNNNNNNNSSGGKPAIINNNGNLYSKFMATNNDPFDCTPTSTPVKPITNSTTTSTATSMPTSNSVTMGTSSTSIPVSNSITMKSPSILALSDDGDKKRKEKESSSSENVNDVIVINSNNHNNNNNNNHNINNGISSKPPPKRLKGS.

The region spanning 47-150 (IFFGRNPKRC…NGTFVKGCIL (104 aa)) is the FHA domain. Positions 84–126 (NNNNNDGDNNNNNNNNNNNNNNNNNNNNNNNNNNNNNNNNNNN) are enriched in low complexity. The tract at residues 84-130 (NNNNNDGDNNNNNNNNNNNNNNNNNNNNNNNNNNNNNNNNNNNTTKN) is disordered. Residues 199 to 472 (YSIQGILGTG…TKGALSHDWF (274 aa)) enclose the Protein kinase domain. ATP contacts are provided by residues 205–213 (LGTGNFSVV) and K228. The active-site Proton acceptor is D323. 2 disordered regions span residues 512–620 (NIPM…PAII) and 640–749 (CTPT…LKGS). A compositionally biased stretch (low complexity) spans 516–561 (TLNSTTTNTTSPNNNNNNNNNNNNKNNNKNIIKSLNSNSNNYNNNS). The span at 562–572 (VLKKTSQSPKT) shows a compositional bias: polar residues. Low complexity-rich tracts occupy residues 590 to 611 (NNNN…NNNN) and 651 to 667 (TNST…TSNS). Residues 668 to 687 (VTMGTSSTSIPVSNSITMKS) are compositionally biased toward polar residues. The span at 696–707 (DGDKKRKEKESS) shows a compositional bias: basic and acidic residues. Residues 708 to 739 (SSENVNDVIVINSNNHNNNNNNNHNINNGISS) are compositionally biased toward low complexity.

Belongs to the protein kinase superfamily. CAMK Ser/Thr protein kinase family. CHK2 subfamily.

It carries out the reaction L-seryl-[protein] + ATP = O-phospho-L-seryl-[protein] + ADP + H(+). The catalysed reaction is L-threonyl-[protein] + ATP = O-phospho-L-threonyl-[protein] + ADP + H(+). In Dictyostelium discoideum (Social amoeba), this protein is Probable serine/threonine-protein kinase fhkD (fhkD).